Reading from the N-terminus, the 216-residue chain is Endo-1,4-beta-xylanase 1 (216 aa).

The signal sequence occupies residues 1–19 (MFLTSVVSLVVGAISCVSA). Residues 29–216 (QMTPRNSCYG…SSGSASITVS (188 aa)) enclose the GH11 domain. The active-site Nucleophile is Glu-112. Catalysis depends on Glu-203, which acts as the Proton donor.

The protein belongs to the glycosyl hydrolase 11 (cellulase G) family.

Its subcellular location is the secreted. It carries out the reaction Endohydrolysis of (1-&gt;4)-beta-D-xylosidic linkages in xylans.. Its pathway is glycan degradation; xylan degradation. Its function is as follows. Endo-1,4-beta-xylanase involved in the hydrolysis of xylan, a major structural heterogeneous polysaccharide found in plant biomass representing the second most abundant polysaccharide in the biosphere, after cellulose. In Claviceps purpurea (Ergot fungus), this protein is Endo-1,4-beta-xylanase 1 (xyl1).